Here is an 820-residue protein sequence, read N- to C-terminus: MAITRRSFLKGVATTSAASVIGPSLLASASANAVETTGTWKVSGSHWGAFRAHIYAGKVQEIKPIELDQNPTEMLNGIKGIIYSPSRVRYPMVRLDWLKKHKYSADTRGNNRFVRVTWDEALDLFYRELERVQKEYGPWALHAGQTGWNQTGSFNNCTAHMQRAVGMHGNYITKVGDYSTGAGQTILPYVLGSTEVYAQGTSWSEILENADNIILWANDPVKNLQVGWNCETHESYAYLAQLKEKVAKGEINVISVDPVKNKTQRYLENDHLYVNPMTDVPFMLAIAHVLYTENLYDKKFIETYCLGFEEFINYVQGKTKDKVEKTPEWAAPICGVKADKIREFARMLVKGRTQILMGWCIQRQEHGEQPYWAAAVVAAMIGQIGLPGGGISYGHHYSSIGVPSTGFAGPGGFPRNLDAGMKPKWDNNDFNGYSRTIPVARWIDCLLEPGKEINYNGGKVKLPDFKMMVISGCNPWHHHQDRNRMKQAFQKLQTVVTIDFAWTATCRFSDIVLPACTQWERNDIDVYGSYSSRGLIAMHRLVDPLFQSKPDFQIMKELTERFGRSEEYSRGMSEMDWIRSLYNDCKKSNEGKFEMPEFDEFWEKSVLDFGQGQPWVRHADFRQDPEINPLGTPSGFIEITSRKIGRYGYEHCQEHPMWFEKSERSHGGPGSDKHPFWLQSCHPDKRLHSQMCESEEFRATYAVKGREPVYINPLDAKAKGIKEGDLVRVFNDRGQLLAGAVLTDSYPRGVIRIEEGAWYGPLSEKVGAICTYGDPNTLTQDIGSSELAQATSANTCIVDFEKFTGKVPPVTSFGGPIEVA.

Residues 1 to 33 (MAITRRSFLKGVATTSAASVIGPSLLASASANA) constitute a signal peptide (tat-type signal). Ser179 contributes to the Mo-bis(molybdopterin guanine dinucleotide) binding site.

The protein belongs to the prokaryotic molybdopterin-containing oxidoreductase family. Mo-bis(molybdopterin guanine dinucleotide) serves as cofactor. In terms of processing, predicted to be exported by the Tat system. The position of the signal peptide cleavage has not been experimentally proven.

The protein localises to the periplasm. It catalyses the reaction trimethylamine + 2 Fe(III)-[cytochrome c] + H2O = trimethylamine N-oxide + 2 Fe(II)-[cytochrome c] + 3 H(+). Functionally, reduces trimethylamine-N-oxide (TMAO) into trimethylamine; an anaerobic reaction coupled to energy-yielding reactions. This is Trimethylamine-N-oxide reductase (torA) from Vibrio vulnificus (strain YJ016).